Here is a 241-residue protein sequence, read N- to C-terminus: Uracil-DNA glycosylase (241 aa).

Catalysis depends on Asp-71, which acts as the Proton acceptor.

It belongs to the uracil-DNA glycosylase (UDG) superfamily. UNG family.

The protein resides in the cytoplasm. The catalysed reaction is Hydrolyzes single-stranded DNA or mismatched double-stranded DNA and polynucleotides, releasing free uracil.. In terms of biological role, excises uracil residues from the DNA which can arise as a result of misincorporation of dUMP residues by DNA polymerase or due to deamination of cytosine. This Xanthomonas axonopodis pv. citri (strain 306) protein is Uracil-DNA glycosylase.